We begin with the raw amino-acid sequence, 170 residues long: Ribosomal RNA small subunit methyltransferase G (170 aa).

S-adenosyl-L-methionine contacts are provided by residues G70, L75, 120–121 (AE), and R138.

The protein belongs to the methyltransferase superfamily. RNA methyltransferase RsmG family.

It is found in the cytoplasm. Its function is as follows. Specifically methylates the N7 position of guanine in position 518 of 16S rRNA. The chain is Ribosomal RNA small subunit methyltransferase G from Mycobacterium ulcerans (strain Agy99).